The sequence spans 449 residues: MMLSTEGREGFVVKVRGLPWSCSAEEVMRFFSDCKIQNGTSGVRFIYTREGRPSGEAFVELESEDEVKLALKKDRETMGHRYVEVFKSNSVEMDWVLKHTGPNSPDTANDGFVRLRGLPFGCSKEEIVQFFSGLEIVPNGMTLPVDFQGRSTGEAFVQFASQEIAEKALKKHKERIGHRYIEIFKSSRAEVRTHYDPPRKLMTMQRPGPYDRPGAGRGYNSIGRGAGFERMRRGAYGGGYGGYDDYGGYNDGYGFGSDRFGRDLNYCFSGMSDHRYGDGGSSFQSTTGHCVHMRGLPYRATENDIYNFFSPLNPMRVHIEIGPDGRVTGEADVEFATHEDAVAAMAKDKANMQHRYVELFLNSTAGTSGGAYDHSYVELFLNSTAGASGGAYGSQMMGGMGLSNQSSYGGPASQQLSGGYGGGYGGQSSMSGYDQVLQENSSDYQSNLA.

The residue at position 1 (Met1) is an N-acetylmethionine. The residue at position 2 (Met2) is an N-acetylmethionine; in Heterogeneous nuclear ribonucleoprotein H2, N-terminally processed. The RRM 1 domain maps to 11–90 (FVVKVRGLPW…RYVEVFKSNS (80 aa)). Ser23 bears the Phosphoserine mark. Residue Lys35 forms a Glycyl lysine isopeptide (Lys-Gly) (interchain with G-Cter in SUMO2) linkage. Residues Ser54 and Ser63 each carry the phosphoserine modification. Residue Lys87 forms a Glycyl lysine isopeptide (Lys-Gly) (interchain with G-Cter in SUMO2) linkage. Ser90 is subject to Phosphoserine. Residue Lys98 forms a Glycyl lysine isopeptide (Lys-Gly) (interchain with G-Cter in SUMO2) linkage. One can recognise an RRM 2 domain in the interval 111 to 188 (GFVRLRGLPF…RYIEIFKSSR (78 aa)). Arg233 is modified (dimethylated arginine; alternate). The residue at position 233 (Arg233) is an Omega-N-methylarginine; alternate. One copy of the 1-1 repeat lies at 234–249 (GAYGGGYGGYDDYGGY). Residues 234 to 433 (GAYGGGYGGY…YGGQSSMSGY (200 aa)) are 2 X 16 AA Gly-rich approximate repeats. A Phosphotyrosine modification is found at Tyr246. The RRM 3 domain occupies 289–364 (HCVHMRGLPY…RYVELFLNST (76 aa)). Ser310 is subject to Phosphoserine. 3 tandem repeats follow at residues 354–372 (HRYVELFLNSTAGTSGGAY), 374–392 (HSYVELFLNSTAGASGGAY), and 418–433 (GGYGGGYGGQSSMSGY). Positions 354 to 392 (HRYVELFLNSTAGTSGGAYDHSYVELFLNSTAGASGGAY) are 2 X 19 AA perfect repeats.

As to quaternary structure, component of a ribonucleoprotein complex containing mRNAs and RNA-binding proteins including DDX5, HNRNPH2 and SRSF1 as well as splicing regulator ARVCF. Interacts with TXNL4/DIM1.

It is found in the nucleus. It localises to the nucleoplasm. Functionally, this protein is a component of the heterogeneous nuclear ribonucleoprotein (hnRNP) complexes which provide the substrate for the processing events that pre-mRNAs undergo before becoming functional, translatable mRNAs in the cytoplasm. Binds poly(RG). This is Heterogeneous nuclear ribonucleoprotein H2 (Hnrnph2) from Mus musculus (Mouse).